Consider the following 173-residue polypeptide: Large ribosomal subunit protein uL10 (173 aa).

The protein belongs to the universal ribosomal protein uL10 family. In terms of assembly, part of the ribosomal stalk of the 50S ribosomal subunit. The N-terminus interacts with L11 and the large rRNA to form the base of the stalk. The C-terminus forms an elongated spine to which L12 dimers bind in a sequential fashion forming a multimeric L10(L12)X complex.

Forms part of the ribosomal stalk, playing a central role in the interaction of the ribosome with GTP-bound translation factors. This Cupriavidus metallidurans (strain ATCC 43123 / DSM 2839 / NBRC 102507 / CH34) (Ralstonia metallidurans) protein is Large ribosomal subunit protein uL10.